The chain runs to 552 residues: Probable glucomannan 4-beta-mannosyltransferase 10 (552 aa).

Residues 62–82 traverse the membrane as a helical segment; sequence IVPLFKCLVAFCLIISLLVFI. The active site involves Asp161. Residues Asp220 and Asp222 each contribute to the substrate site. The active site involves Asp314. 4 helical membrane-spanning segments follow: residues 393–413, 430–450, 509–529, and 530–550; these read IIVH…SVFF, ITLC…FWIL, EIMV…FGNT, and LLYL…VGFV.

The protein belongs to the glycosyltransferase 2 family. Plant cellulose synthase-like A subfamily.

Its subcellular location is the golgi apparatus membrane. The enzyme catalyses GDP-mannose + (glucomannan)n = GDP + (glucomannan)n+1.. Probable mannan synthase which consists of a 4-beta-mannosyltransferase activity on mannan using GDP-mannose. The beta-1,4-mannan product is the backbone for galactomannan synthesis by galactomannan galactosyltransferase. Galactomannan is a noncellulosic polysaccharides of plant cell wall. The polypeptide is Probable glucomannan 4-beta-mannosyltransferase 10 (Arabidopsis thaliana (Mouse-ear cress)).